Consider the following 315-residue polypeptide: Alpha- and gamma-adaptin-binding protein p34 (315 aa).

The interval 197 to 234 (IGSADPCHPEQPHLPAADSTESLSDHRGGASNTTDAQV) is disordered. Phosphoserine is present on residues S310 and S311.

Associated with AP-1 and AP-2 complexes. Widely expressed, including in skin and keratinocytes, with highest levels in adrenal gland, rectum and thymus.

The protein localises to the cytoplasm. The protein resides in the cytosol. Its function is as follows. May be involved in endocytic recycling of growth factor receptors such as EGFR. In Homo sapiens (Human), this protein is Alpha- and gamma-adaptin-binding protein p34 (AAGAB).